The following is a 353-amino-acid chain: Cruciform cutting endonuclease 1, mitochondrial (353 aa).

Asp293 and Asp294 together coordinate Mg(2+).

As to quaternary structure, homodimer. Requires Mg(2+) as cofactor.

It is found in the mitochondrion. The catalysed reaction is Endonucleolytic cleavage at a junction such as a reciprocal single-stranded crossover between two homologous DNA duplexes (Holliday junction).. In terms of biological role, capable of resolving Holliday junctions. Specific for 4-way junctions. Seems to be important for the maintenance of mitochondrial DNA. Cleaves fixed junctions at the point of strand exchange. Cleaves after 5'-CT-3' sequence. In Saccharomyces cerevisiae (strain ATCC 204508 / S288c) (Baker's yeast), this protein is Cruciform cutting endonuclease 1, mitochondrial (CCE1).